The chain runs to 374 residues: Queuine tRNA-ribosyltransferase (374 aa).

Residue Asp-89 is the Proton acceptor of the active site. Substrate-binding positions include 89-93, Asp-143, Gln-187, and Gly-214; that span reads DSGGF. Residues 245–251 form an RNA binding region; it reads GVGKPED. The active-site Nucleophile is Asp-264. The interval 269-273 is RNA binding; important for wobble base 34 recognition; it reads TRNAR. Positions 302, 304, 307, and 333 each coordinate Zn(2+).

It belongs to the queuine tRNA-ribosyltransferase family. As to quaternary structure, homodimer. Within each dimer, one monomer is responsible for RNA recognition and catalysis, while the other monomer binds to the replacement base PreQ1. Zn(2+) is required as a cofactor.

The enzyme catalyses 7-aminomethyl-7-carbaguanine + guanosine(34) in tRNA = 7-aminomethyl-7-carbaguanosine(34) in tRNA + guanine. The protein operates within tRNA modification; tRNA-queuosine biosynthesis. Functionally, catalyzes the base-exchange of a guanine (G) residue with the queuine precursor 7-aminomethyl-7-deazaguanine (PreQ1) at position 34 (anticodon wobble position) in tRNAs with GU(N) anticodons (tRNA-Asp, -Asn, -His and -Tyr). Catalysis occurs through a double-displacement mechanism. The nucleophile active site attacks the C1' of nucleotide 34 to detach the guanine base from the RNA, forming a covalent enzyme-RNA intermediate. The proton acceptor active site deprotonates the incoming PreQ1, allowing a nucleophilic attack on the C1' of the ribose to form the product. After dissociation, two additional enzymatic reactions on the tRNA convert PreQ1 to queuine (Q), resulting in the hypermodified nucleoside queuosine (7-(((4,5-cis-dihydroxy-2-cyclopenten-1-yl)amino)methyl)-7-deazaguanosine). The sequence is that of Queuine tRNA-ribosyltransferase from Shewanella frigidimarina (strain NCIMB 400).